The chain runs to 250 residues: Undecaprenyl-diphosphatase (250 aa).

Helical transmembrane passes span 35–55 (DLSV…IFVG), 73–93 (INLT…GVLL), 100–120 (SLSN…ALLI), 146–166 (ALAI…SLLI), 171–191 (EIAL…AGLL), 200–220 (SYSI…LFIL), and 229–249 (LKIF…LGGI).

It belongs to the UppP family.

It localises to the cell inner membrane. The enzyme catalyses di-trans,octa-cis-undecaprenyl diphosphate + H2O = di-trans,octa-cis-undecaprenyl phosphate + phosphate + H(+). Catalyzes the dephosphorylation of undecaprenyl diphosphate (UPP). Confers resistance to bacitracin. The polypeptide is Undecaprenyl-diphosphatase (Thermosipho melanesiensis (strain DSM 12029 / CIP 104789 / BI429)).